A 368-amino-acid chain; its full sequence is 3-dehydroquinate synthase (368 aa).

Residues 110–114 (GVIGD), 134–135 (TS), K147, and K156 each bind NAD(+). Residues E189, H254, and H271 each contribute to the Zn(2+) site.

This sequence belongs to the sugar phosphate cyclases superfamily. Dehydroquinate synthase family. NAD(+) serves as cofactor. The cofactor is Co(2+). Requires Zn(2+) as cofactor.

It localises to the cytoplasm. It catalyses the reaction 7-phospho-2-dehydro-3-deoxy-D-arabino-heptonate = 3-dehydroquinate + phosphate. It functions in the pathway metabolic intermediate biosynthesis; chorismate biosynthesis; chorismate from D-erythrose 4-phosphate and phosphoenolpyruvate: step 2/7. In terms of biological role, catalyzes the conversion of 3-deoxy-D-arabino-heptulosonate 7-phosphate (DAHP) to dehydroquinate (DHQ). The polypeptide is 3-dehydroquinate synthase (Thermosynechococcus vestitus (strain NIES-2133 / IAM M-273 / BP-1)).